Reading from the N-terminus, the 550-residue chain is Acetyl-coenzyme A transporter 1 (550 aa).

Basic and acidic residues-rich tracts occupy residues 1–12 (MSPTISHKDSSR) and 36–52 (DDSR…REVL). The disordered stretch occupies residues 1–58 (MSPTISHKDSSRQRRSGMFSHALDMKSGPLPPGGWDDSRRDSVGGEGDREVLLGDAGP). Topologically, residues 1-74 (MSPTISHKDS…PRSYRSELSS (74 aa)) are cytoplasmic. Ser42 is modified (phosphoserine). Residues 75–95 (ILLLLFLYVLQGIPLGLAGSI) form a helical membrane-spanning segment. Residues 96–113 (PLILQSKNVSYTDQAFFS) lie on the Extracellular side of the membrane. Asn103 carries N-linked (GlcNAc...) asparagine glycosylation. The chain crosses the membrane as a helical span at residues 114–134 (FVFWPFSLKLLWAPLVDAVYF). Topologically, residues 135–141 (KNFGRRK) are cytoplasmic. Residues 142-162 (SWLVPTQYTLGIFMIYLSTQV) traverse the membrane as a helical segment. Over 163 to 175 (DRLLGNIDGRTPD) the chain is Extracellular. A helical transmembrane segment spans residues 176–196 (VVALTVTFFLFEFLAATQDIA). The Cytoplasmic portion of the chain corresponds to 197 to 217 (VDGWALTMLSRENVGYASTCN). A helical membrane pass occupies residues 218–238 (SVGQTAGYFLGNVLFLALESA). Residues 239-256 (DFCNKYLRFQPQPRGIVT) lie on the Extracellular side of the membrane. Residues 257–277 (LSDFLFFWGTVFLITTTLVAL) traverse the membrane as a helical segment. Topologically, residues 278–300 (LKKENREASIVKEETQGITDTYK) are cytoplasmic. The helical transmembrane segment at 301–321 (LLFSIIKMPAVLAFCLLILTS) threads the bilayer. Over 322–344 (KIGFSAADAVTGLKLVEEGVPKE) the chain is Extracellular. The chain crosses the membrane as a helical span at residues 345–365 (HLALLAVPMVPLQIILPLLIS). The Cytoplasmic segment spans residues 366–375 (KYTAGPQPLN). A helical membrane pass occupies residues 376-396 (IFYKAMPYRLLLGLEYALLVW). The Extracellular portion of the chain corresponds to 397-405 (WTPKVEHQG). Residues 406–426 (GFPLYYYIIVLLSYALHQVTL) form a helical membrane-spanning segment. Residues 427-509 (YSMYVSIMAF…LGGSCVTALD (83 aa)) are Cytoplasmic-facing. The chain crosses the membrane as a helical span at residues 510 to 530 (GYYVESIICVLIGFGWWFFLG). Residues 531–550 (PKFKKLQDEGPSSWKCKRNN) lie on the Extracellular side of the membrane.

The protein belongs to the SLC33A transporter family. As to quaternary structure, homodimerizes. In terms of tissue distribution, expressed in all adult tissues examined including brain, heart, kidney, liver and spleen, with maximum expression in liver and kidney.

The protein localises to the endoplasmic reticulum membrane. The catalysed reaction is acetyl-CoA(in) = acetyl-CoA(out). In terms of biological role, acetyl-CoA transporter that mediates active acetyl-CoA import through the endoplasmic reticulum (ER) membrane into the ER lumen where specific ER-based acetyl-CoA:lysine acetyltransferases are responsible for the acetylation of ER-based protein substrate, such as BACE1. Necessary for O-acetylation of gangliosides. The protein is Acetyl-coenzyme A transporter 1 (Slc33a1) of Mus musculus (Mouse).